Consider the following 396-residue polypeptide: Cysteine desulfurase (396 aa).

Pyridoxal 5'-phosphate is bound by residues Gly71–Thr72, Asn148, Gln176, and Ser196–His198. An N6-(pyridoxal phosphate)lysine modification is found at Lys199. Residue Thr231 participates in pyridoxal 5'-phosphate binding. The active-site Cysteine persulfide intermediate is the Cys319. Residue Cys319 coordinates [2Fe-2S] cluster.

It belongs to the class-V pyridoxal-phosphate-dependent aminotransferase family. NifS/IscS subfamily. In terms of assembly, homodimer. Requires pyridoxal 5'-phosphate as cofactor.

The enzyme catalyses (sulfur carrier)-H + L-cysteine = (sulfur carrier)-SH + L-alanine. Catalyzes the removal of elemental sulfur atoms from cysteine to produce alanine. Seems to participate in the biosynthesis of the nitrogenase metalloclusters by providing the inorganic sulfur required for the Fe-S core formation. This Azotobacter chroococcum mcd 1 protein is Cysteine desulfurase.